The primary structure comprises 431 residues: Na(+)-translocating NADH-quinone reductase subunit F (431 aa).

Residues 10–30 (ISIASLVFCVIGLILSGVILI) traverse the membrane as a helical segment. A 2Fe-2S ferredoxin-type domain is found at 41–133 (CKLKINNDDS…DMNLEIEERY (93 aa)). Positions 76, 82, 85, and 117 each coordinate [2Fe-2S] cluster. The region spanning 136–286 (ASSWEGTVVS…SGPYGESFMK (151 aa)) is the FAD-binding FR-type domain.

It belongs to the NqrF family. In terms of assembly, composed of six subunits; NqrA, NqrB, NqrC, NqrD, NqrE and NqrF. Requires [2Fe-2S] cluster as cofactor. FAD serves as cofactor.

Its subcellular location is the cell inner membrane. The enzyme catalyses a ubiquinone + n Na(+)(in) + NADH + H(+) = a ubiquinol + n Na(+)(out) + NAD(+). NQR complex catalyzes the reduction of ubiquinone-1 to ubiquinol by two successive reactions, coupled with the transport of Na(+) ions from the cytoplasm to the periplasm. The first step is catalyzed by NqrF, which accepts electrons from NADH and reduces ubiquinone-1 to ubisemiquinone by a one-electron transfer pathway. This is Na(+)-translocating NADH-quinone reductase subunit F from Chlamydia felis (strain Fe/C-56) (Chlamydophila felis).